Reading from the N-terminus, the 493-residue chain is Amphoterin-induced protein 1 (493 aa).

Residues 1 to 27 form the signal peptide; that stretch reads MQPQRDLRGLWLLLLSLFLLLFEVARA. Residues 28–61 form the LRRNT domain; that stretch reads GRPVVSCPANCLCASNILSCSKQQLPNVPQSLPG. The Extracellular segment spans residues 28–372; sequence GRPVVSCPAN…LHGHHDTLNT (345 aa). 2 disulfides stabilise this stretch: Cys34–Cys40 and Cys38–Cys47. LRR repeat units follow at residues 62-83, 87-108, 111-132, 135-156, 159-179, and 186-206; these read YTAL…WTPT, NLHS…AFVP, NLRY…LFSG, ALEV…AFED, QLQK…ELIK, and KLTL…TDLQ. Residue Asn72 is glycosylated (N-linked (GlcNAc...) asparagine). One can recognise an LRRCT domain in the interval 221–272; it reads NPLECDCKLYQLFSHWQYRQLSSVMDFQEDLYCVHSKKLHNVFSLDFFNCSE. 3 disulfides stabilise this stretch: Cys225–Cys253, Cys227–Cys270, and Cys290–Cys341. N-linked (GlcNAc...) asparagine glycosylation is found at Asn269, Asn315, Asn349, and Asn360. The 85-residue stretch at 269-353 folds into the Ig-like C2-type domain; that stretch reads NCSEYKESAW…MGETFNETLS (85 aa). The chain crosses the membrane as a helical span at residues 373-393; it reads AYTTLVGCILSVVLVLIYLYL. Topologically, residues 394–493 are cytoplasmic; sequence TPCRCWCRGV…SVFSDTPIVV (100 aa). The tract at residues 405–493 is disordered; the sequence is KPSSHQGDSL…SVFSDTPIVV (89 aa). The segment covering 408–424 has biased composition (polar residues); the sequence is SHQGDSLSSSMLSTTPN. Residues 431–442 show a composition bias toward basic and acidic residues; that stretch reads GDKDDGFDRRVA. A phosphoserine mark is found at Ser477 and Ser481.

It belongs to the immunoglobulin superfamily. AMIGO family. In terms of assembly, homodimer, and heterodimer with AMIGO2 and AMIGO3. Interacts with KCNB1.

The protein localises to the cell membrane. It is found in the perikaryon. It localises to the cell projection. Its subcellular location is the dendrite. The protein resides in the axon. Its function is as follows. Promotes growth and fasciculation of neurites from cultured hippocampal neurons. May be involved in fasciculation as well as myelination of developing neural axons. May have a role in regeneration as well as neural plasticity in the adult nervous system. May mediate homophilic as well as heterophilic cell-cell interaction and contribute to signal transduction through its intracellular domain. Assembled with KCNB1 modulates the gating characteristics of the delayed rectifier voltage-dependent potassium channel KCNB1. In Rattus norvegicus (Rat), this protein is Amphoterin-induced protein 1.